The following is a 426-amino-acid chain: Tyrosine-protein phosphatase non-receptor type 20 (426 aa).

The span at Met1–Lys10 shows a compositional bias: basic residues. The segment at Met1–His58 is disordered. The segment covering Asn21–Ser35 has biased composition (low complexity). At Ser76 the chain carries Phosphoserine. Residues Asn95–Arg117 are compositionally biased toward polar residues. The disordered stretch occupies residues Asn95–Thr124. Ser127 is modified (phosphoserine). Positions Ile165–Val418 constitute a Tyrosine-protein phosphatase domain. Residues Asp329, Cys359 to Arg365, and Gln403 each bind substrate. The Phosphocysteine intermediate role is filled by Cys359.

The protein belongs to the protein-tyrosine phosphatase family. Non-receptor class subfamily. As to expression, testis-specific. Specifically expressed in testicular germ cells that undergo meiosis (at protein level).

The protein localises to the nucleus. It is found in the cytoplasm. It localises to the cytoskeleton. The protein resides in the microtubule organizing center. Its subcellular location is the centrosome. It carries out the reaction O-phospho-L-tyrosyl-[protein] + H2O = L-tyrosyl-[protein] + phosphate. In terms of biological role, tyrosine-protein phosphatase targeted to sites of actin polymerization in response of varied extracellular stimuli. Has tyrosine phosphatase activity towards various tyrosyl phosphorylated substrates. In Mus musculus (Mouse), this protein is Tyrosine-protein phosphatase non-receptor type 20 (Ptpn20).